The primary structure comprises 239 residues: Sensory rhodopsin-1 (239 aa).

The Extracellular portion of the chain corresponds to M1–A3. Residues V4–L25 traverse the membrane as a helical segment. Over Y26 to H34 the chain is Cytoplasmic. A helical transmembrane segment spans residues Q35 to A56. Topologically, residues Y57–V70 are extracellular. Residues G71–A92 form a helical membrane-spanning segment. Residues G93–S95 lie on the Cytoplasmic side of the membrane. The helical transmembrane segment at R96–V118 threads the bilayer. Residues T119 to T122 are Extracellular-facing. A helical membrane pass occupies residues L123–V150. Residues P151 to V153 are Cytoplasmic-facing. Residues P154–G181 traverse the membrane as a helical segment. Residues P182–T189 lie on the Extracellular side of the membrane. The helical transmembrane segment at A190–S222 threads the bilayer. The residue at position 205 (K205) is an N6-(retinylidene)lysine. The Cytoplasmic segment spans residues E223–D239.

Belongs to the archaeal/bacterial/fungal opsin family. In terms of assembly, interacts with HTR-I.

Its subcellular location is the cell membrane. Its function is as follows. Involved in the control of phototaxis. Mediates both photoattractant (in the orange light) and photophobic (in the near UV light) responses. The signal is then transmitted to the sensory rhodopsin I transducer (HTR-I). This is Sensory rhodopsin-1 (sopI) from Halobacterium salinarum (strain ATCC 29341 / DSM 671 / R1).